Reading from the N-terminus, the 176-residue chain is Shikimate kinase (176 aa).

10-15 contacts ATP; it reads TSGKSS. A Mg(2+)-binding site is contributed by Ser-14. Substrate contacts are provided by Asp-32, Gly-81, and Arg-138.

This sequence belongs to the shikimate kinase family. In terms of assembly, monomer. Mg(2+) serves as cofactor.

Its subcellular location is the cytoplasm. The catalysed reaction is shikimate + ATP = 3-phosphoshikimate + ADP + H(+). Its pathway is metabolic intermediate biosynthesis; chorismate biosynthesis; chorismate from D-erythrose 4-phosphate and phosphoenolpyruvate: step 5/7. Functionally, catalyzes the specific phosphorylation of the 3-hydroxyl group of shikimic acid using ATP as a cosubstrate. In Chlamydia pneumoniae (Chlamydophila pneumoniae), this protein is Shikimate kinase.